Consider the following 190-residue polypeptide: Surfactant protein C (190 aa).

Residues 1–24 (MDVGSKEVLMESPPDYTAVPGGRL) constitute a propeptide that is removed on maturation. 2 S-palmitoyl cysteine lipidation sites follow: C28 and C29. Residues 59–190 (HMSQKHTEMV…LCGEVPLYYT (132 aa)) constitute a propeptide that is removed on maturation. Residues 94–190 (FSIGSTGTVV…LCGEVPLYYT (97 aa)) enclose the BRICHOS domain. An intrachain disulfide couples C121 to C182.

It localises to the secreted. Its subcellular location is the extracellular space. It is found in the surface film. Functionally, pulmonary surfactant associated proteins promote alveolar stability by lowering the surface tension at the air-liquid interface in the peripheral air spaces. This is Surfactant protein C (SFTPC) from Bos taurus (Bovine).